The sequence spans 220 residues: Probable transaldolase (220 aa).

The active-site Schiff-base intermediate with substrate is lysine 87.

This sequence belongs to the transaldolase family. Type 3B subfamily.

It is found in the cytoplasm. The enzyme catalyses D-sedoheptulose 7-phosphate + D-glyceraldehyde 3-phosphate = D-erythrose 4-phosphate + beta-D-fructose 6-phosphate. The protein operates within carbohydrate degradation; pentose phosphate pathway; D-glyceraldehyde 3-phosphate and beta-D-fructose 6-phosphate from D-ribose 5-phosphate and D-xylulose 5-phosphate (non-oxidative stage): step 2/3. Transaldolase is important for the balance of metabolites in the pentose-phosphate pathway. This chain is Probable transaldolase, found in Porphyromonas gingivalis (strain ATCC 33277 / DSM 20709 / CIP 103683 / JCM 12257 / NCTC 11834 / 2561).